The primary structure comprises 82 residues: MSILKVVEACNLAHTFLKLGYLFRAKTCLDIALDNLELLRRKTNIKEVAVMLNKKTTECLQLKRKIDKKIAQRVLIKIYTIK.

This is an uncharacterized protein from Autographa californica nuclear polyhedrosis virus (AcMNPV).